Reading from the N-terminus, the 873-residue chain is Inner centromere protein A (873 aa).

Disordered regions lie at residues 50–124 (AEPE…KRMT), 237–270 (PANEQQLNLSNQSATPTGSKSDRRSVRRSLVVRK), 282–452 (FSLA…PPPH), 484–535 (KRNT…KVRR), 566–649 (QIDE…LAEQ), 683–736 (LERA…EQAA), and 781–800 (DLNSDDSTDDESQPRKPIPA). A compositionally biased stretch (basic residues) spans 60 to 69 (SQKRRRKKRT). Residues 87-105 (RQSNASWSSSVRRLSVRNQ) show a composition bias toward low complexity. Polar residues predominate over residues 239 to 254 (NEQQLNLSNQSATPTG). Over residues 261-270 (SVRRSLVVRK) the composition is skewed to basic residues. Basic and acidic residues predominate over residues 286–297 (SKRESMTREAVR). A compositionally biased stretch (low complexity) spans 314-325 (SSTSSQRSYQSS). Over residues 437–452 (PSPPCPPSKIVRPPPH) the composition is skewed to pro residues. 4 stretches are compositionally biased toward basic and acidic residues: residues 491 to 535 (TDPK…KVRR), 566 to 584 (QIDEKSEKVREDRMAEEKA), 591 to 649 (KKQE…LAEQ), and 683 to 733 (LERA…KAKE). Positions 494 to 707 (KTEEKERQRL…EERKKREQQE (214 aa)) are SAH. The segment at 782–856 (LNSDDSTDDE…RTSSAVWHSP (75 aa)) is IN box. Residues Ser-849 and Ser-850 each carry the phosphoserine modification.

The protein belongs to the INCENP family. As to quaternary structure, component of the CPC composed of survivin/birc5, incenp, cdca8/borealin and/or cdca9/dasra-A, and aurkb/aurora-B. Interacts (via C-terminus) with aurkb (via N-terminus and kinase domain). Interacts (via N-terminus) with birc5.1, birc5.2, cdca8 and cdca9. Interacts with mtus1.

The protein localises to the nucleus. It localises to the chromosome. The protein resides in the centromere. It is found in the cytoplasm. Its subcellular location is the cytoskeleton. The protein localises to the spindle. It localises to the midbody. The protein resides in the kinetochore. In terms of biological role, component of the chromosomal passenger complex (CPC), a complex that acts as a key regulator of mitosis. The CPC complex has essential functions at the centromere in ensuring correct chromosome alignment and segregation and is required for chromatin-induced microtubule stabilization and spindle assembly. Acts as a scaffold regulating CPC localization and activity. The C-terminus associates with aurkb/aurora-B, the N-terminus associated with cdca8/borealin and/or cdca9/dasra-A tethers the CPC to the inner centromere, and the microtubule binding activity within the central SAH domain directs aurkb/aurora-B toward substrates near microtubules. Activates aurkb. This Xenopus laevis (African clawed frog) protein is Inner centromere protein A (incenp-a).